We begin with the raw amino-acid sequence, 288 residues long: Transmembrane protein 163 (288 aa).

The tract at residues 1–64 (MEPALGSERR…ESGQFSDGLE (64 aa)) is disordered. Residues 1–87 (MEPALGSERR…HEAQNYRKKA (87 aa)) lie on the Cytoplasmic side of the membrane. Phosphoserine is present on S11. Residues 12 to 24 (PPGPGVPRPPPRG) show a composition bias toward pro residues. Positions 25–42 (HAPSTAAPAPSPAPMSSS) are enriched in low complexity. The segment at 41–71 (SSVQSDEERQPRISESGQFSDGLEDRGLLES) is required for interaction with MCOLN1. A phosphoserine mark is found at S45, S54, S56, and S60. Residues 88-108 (LWVSWLSIIVTLALAVAAFTV) form a helical membrane-spanning segment. Topologically, residues 109–115 (SVMRYSA) are extracellular. A helical membrane pass occupies residues 116 to 136 (SAFGFAFDAILDVLSSAIVLW). The Cytoplasmic portion of the chain corresponds to 137 to 149 (RYSNAAAVHSANR). The helical transmembrane segment at 150 to 170 (EYIACVILGVIFLLSSICIVV) threads the bilayer. Residues 171-186 (KAIHDLSTRLLPEVDD) are Extracellular-facing. Residues 187–207 (FLFSVSILSGILCSVLAVLKF) traverse the membrane as a helical segment. Topologically, residues 208–216 (MLGKVLTSR) are cytoplasmic. Residues 217-237 (ALITDGFNSLVGGVMGFSILL) form a helical membrane-spanning segment. Over 238–254 (SAEVFKHNAAVWYLDGS) the chain is Extracellular. Residues 255-275 (IGVLIGLTIFAYGVKLLIDMV) traverse the membrane as a helical segment. Residues 276 to 288 (PRVRQTRHYEMFE) are Cytoplasmic-facing.

Belongs to the TMEM163 family. As to quaternary structure, homodimer. Interacts with MCOLN1. Interacts with SLC30A1, SLC30A2, SLC30A3 and SLC30A4. Widely expressed, with high expression in the brain, cerebellum, heart, lung and spleen. In the brain, mainly expressed in the glutaminergic neuron subpopulations.

The protein resides in the cytoplasmic vesicle. Its subcellular location is the secretory vesicle. It is found in the synaptic vesicle membrane. It localises to the early endosome membrane. The protein localises to the late endosome membrane. The protein resides in the lysosome membrane. Its subcellular location is the cell membrane. It carries out the reaction Zn(2+)(in) = Zn(2+)(out). Its function is as follows. Zinc ion transporter that mediates zinc efflux and plays a crucial role in intracellular zinc homeostasis. Binds the divalent cations Zn(2+), Ni(2+), and to a minor extent Cu(2+). Is a functional modulator of P2X purinoceptors, including P2RX1, P2RX3, P2RX4 and P2RX7. Plays a role in central nervous system development and is required for myelination, and survival and proliferation of oligodendrocytes. In Mus musculus (Mouse), this protein is Transmembrane protein 163 (Tmem163).